The following is a 181-amino-acid chain: Lectin beta-1 and beta-2 chains (181 aa).

E119 and D121 together coordinate Mn(2+). Residues D121, F123, N125, and D129 each contribute to the Ca(2+) site. Positions 129 and 136 each coordinate Mn(2+).

It belongs to the leguminous lectin family. As to quaternary structure, tetramer of two alpha and two beta chains.

In Lathyrus ochrus (Cyprus-vetch), this protein is Lectin beta-1 and beta-2 chains.